The sequence spans 524 residues: Unconventional prefoldin RPB5 interactor (524 aa).

3 disordered regions span residues 1-20 (MEAPPDPRPHASAAAPLRAP), 284-320 (SVNGSSSYHSNEDDGDNNDDGGDSENDHDTLGVEDNS), and 335-373 (VRINTGKNTTLKFSEKKEEAKRKRKNSSGSGHSPQELPM). The span at 296 to 307 (DDGDNNDDGGDS) shows a compositional bias: acidic residues. At serine 361 the chain carries Phosphoserine; by RPS6KB1. A Phosphoserine modification is found at serine 431.

The protein belongs to the RNA polymerase II subunit 5-mediating protein family. In terms of assembly, homodimer. Component of the PAQosome complex which is responsible for the biogenesis of several protein complexes and which consists of R2TP complex members RUVBL1, RUVBL2, RPAP3 and PIH1D1, URI complex members PFDN2, PFDN6, PDRG1, UXT and URI1 as well as ASDURF, POLR2E and DNAAF10/WDR92. Interacts with POLR2E/RPB5, RUVBL2 and RUVBL1. Interacts with PFDN2, PFDN4 and STAP1; the interactions are phosphorylation-dependent and occur in a growth-dependent manner in the mitochondrion. Interacts with UXT. Interacts with PPP1CC; the interaction is phosphorylation-dependent and occurs in a growth factor-dependent manner. Interacts (via the middle C-terminal region) with GTF2F1 and GTF2F2. Interacts with DMAP1. Interacts with TSC1 and TSC2. Interacts with PRPF8 and EFTUD2 in a ZNHIT2-dependent manner. Post-translationally, phosphorylated. Phosphorylation occurs essentially on serine residues. Phosphorylation occurs in response to androgen treatment in prostate cancer cells in a mTOR-dependent manner. Phosphorylated; hyperhosphorylated in mitochondria in a mTORC-dependent signaling pathway. Phosphorylated at Ser-361 by RPS6KB1 in a growth factor- and rapamycin-dependent manner. S6K1-mediated mitochondrial phosphorylation at Ser-361 disrupts the URI1-PPP1CC complex in the mitochondrion, relieves PPP1CC phosphatase inhibition activity and hence engages a negative feedback diminishing RPS6KB1 kinase activity, preventing sustained S6K1-dependent signaling.

Its subcellular location is the nucleus. The protein resides in the cytoplasm. It localises to the mitochondrion. It is found in the cell projection. The protein localises to the dendrite. Its function is as follows. Involved in gene transcription regulation. Acts as a transcriptional repressor in concert with the corepressor UXT to regulate androgen receptor (AR) transcription. May act as a tumor suppressor to repress AR-mediated gene transcription and to inhibit anchorage-independent growth in prostate cancer cells. Required for cell survival in ovarian cancer cells. Together with UXT, associates with chromatin to the NKX3-1 promoter region. In terms of biological role, plays a central role in maintaining S6K1 signaling and BAD phosphorylation under normal growth conditions thereby protecting cells from potential deleterious effects of sustained S6K1 signaling. The URI1-PPP1CC complex acts as a central component of a negative feedback mechanism that counteracts excessive S6K1 survival signaling to BAD in response to growth factors. Mediates inhibition of PPP1CC phosphatase activity in mitochondria. Coordinates the regulation of nutrient-sensitive gene expression availability in a mTOR-dependent manner. Seems to be a scaffolding protein able to assemble a prefoldin-like complex that contains PFDs and proteins with roles in transcription and ubiquitination. The protein is Unconventional prefoldin RPB5 interactor (URI1) of Bos taurus (Bovine).